A 546-amino-acid polypeptide reads, in one-letter code: U3 small nucleolar RNA-associated protein 18 homolog (546 aa).

Disordered regions lie at residues 1 to 55 (MSLS…LEES), 94 to 118 (SAVR…EENG), and 177 to 205 (NPGT…DGGV). Positions 13–23 (IKREELKKQYE) are enriched in basic and acidic residues. The segment covering 24-35 (DVEDEEEIGSDD) has biased composition (acidic residues). Position 33 is a phosphoserine (Ser33). Over residues 45-55 (TEKEKQKLEES) the composition is skewed to basic and acidic residues. 2 stretches are compositionally biased toward acidic residues: residues 101–117 (DYED…DEEN) and 193–205 (ESSD…DGGV). WD repeat units lie at residues 242-281 (PSNG…NTKI), 372-411 (KMNG…CLYK), 413-454 (VDEG…GGKR), and 509-545 (STMH…HYQN). The DWD box signature appears at 389–404 (LLSSGGDGQVYVWDLR).

Belongs to the WD repeat UTP18 family.

Its subcellular location is the nucleus. The protein localises to the nucleolus. In terms of biological role, involved in nucleolar processing of pre-18S ribosomal RNA. This chain is U3 small nucleolar RNA-associated protein 18 homolog, found in Arabidopsis thaliana (Mouse-ear cress).